Here is a 258-residue protein sequence, read N- to C-terminus: ADP-ribose glycohydrolase MACROD1 (258 aa).

3 positions are modified to N6-succinyllysine: lysine 29, lysine 36, and lysine 62. Lysine 71 participates in a covalent cross-link: Glycyl lysine isopeptide (Lys-Gly) (interchain with G-Cter in SUMO2). The 182-residue stretch at 74–255 (NPKYKKDKQL…IYQERLPHYF (182 aa)) folds into the Macro domain. 92 to 94 (GDI) is a binding site for substrate. An N6-acetyllysine modification is found at lysine 96. Residues 105–107 (AAN), 112–117 (GGGGVD), 200–206 (ISTGVFG), and phenylalanine 239 contribute to the substrate site.

Belongs to the MacroD-type family. MacroD1/2-like subfamily. Interacts with ESR1; Interacts in a manner that is estrogen independent but is enhanced by estrogen. Interacts (via macro domain) with AR.

It is found in the nucleus. The enzyme catalyses 3''-O-acetyl-ADP-D-ribose + H2O = ADP-D-ribose + acetate + H(+). It carries out the reaction 2''-O-acetyl-ADP-D-ribose + H2O = ADP-D-ribose + acetate + H(+). It catalyses the reaction 4-O-(ADP-D-ribosyl)-L-aspartyl-[protein] + H2O = L-aspartyl-[protein] + ADP-D-ribose + H(+). The catalysed reaction is 5-O-(ADP-D-ribosyl)-L-glutamyl-[protein] + H2O = L-glutamyl-[protein] + ADP-D-ribose + H(+). The enzyme catalyses alpha-NAD(+) + H2O = ADP-D-ribose + nicotinamide + H(+). Its activity is regulated as follows. Subject to competitive inhibition by the product ADP-ribose. Functionally, removes ADP-ribose from aspartate and glutamate residues in proteins bearing a single ADP-ribose moiety. Inactive towards proteins bearing poly-ADP-ribose. Deacetylates O-acetyl-ADP ribose, a signaling molecule generated by the deacetylation of acetylated lysine residues in histones and other proteins. Plays a role in estrogen signaling. Binds to androgen receptor (AR) and amplifies the transactivation function of AR in response to androgen. May play an important role in carcinogenesis and/or progression of hormone-dependent cancers by feed-forward mechanism that activates ESR1 transactivation. Could be an ESR1 coactivator, providing a positive feedback regulatory loop for ESR1 signal transduction. Could be involved in invasive growth by down-regulating CDH1 in endometrial cancer cells. Enhances ESR1-mediated transcription activity. This chain is ADP-ribose glycohydrolase MACROD1 (Macrod1), found in Rattus norvegicus (Rat).